The chain runs to 207 residues: Outer-membrane lipoprotein LolB (207 aa).

A signal peptide spans Met1–Ala21. Cys22 carries the N-palmitoyl cysteine lipid modification. Cys22 carries the S-diacylglycerol cysteine lipid modification.

This sequence belongs to the LolB family. In terms of assembly, monomer.

It localises to the cell outer membrane. Plays a critical role in the incorporation of lipoproteins in the outer membrane after they are released by the LolA protein. The sequence is that of Outer-membrane lipoprotein LolB from Escherichia coli O6:H1 (strain CFT073 / ATCC 700928 / UPEC).